A 92-amino-acid chain; its full sequence is Large ribosomal subunit protein eL43 (92 aa).

Residues C39, C42, C57, and C60 each coordinate Zn(2+). The C4-type zinc-finger motif lies at 39–60; it reads CSFCGKTKMKRKAVGIWHCGSC.

Belongs to the eukaryotic ribosomal protein eL43 family. Component of the large ribosomal subunit.

It localises to the cytoplasm. In terms of biological role, component of the large ribosomal subunit. The ribosome is a large ribonucleoprotein complex responsible for the synthesis of proteins in the cell. The polypeptide is Large ribosomal subunit protein eL43 (RPL37A) (Gallus gallus (Chicken)).